The sequence spans 75 residues: Large ribosomal subunit protein bL31 (75 aa).

Zn(2+)-binding residues include C16, C18, C36, and C39.

Belongs to the bacterial ribosomal protein bL31 family. Type A subfamily. In terms of assembly, part of the 50S ribosomal subunit. It depends on Zn(2+) as a cofactor.

Binds the 23S rRNA. In Desulforapulum autotrophicum (strain ATCC 43914 / DSM 3382 / VKM B-1955 / HRM2) (Desulfobacterium autotrophicum), this protein is Large ribosomal subunit protein bL31.